Here is a 29-residue protein sequence, read N- to C-terminus: Small toxic protein ZorO (29 aa).

A helical membrane pass occupies residues 10 to 27 (VLIAVLELLVALLRLIDL).

It is found in the cell inner membrane. Toxic component of a type I toxin-antitoxin (TA) system. Expression in the absence of its cognate antitoxin (small sRNA orzO) leads to cell stasis and a decrease in colony-forming units. Repression of ZorO toxicity requires base pairing between zorO mRNA and sRNA OrzO, as well as RNase III (rnc), suggesting the mRNA is degraded. Base pairing occurs between 18 bases in the 5' UTR of zorO mRNA and the 5' end of OrzO sRNA. sRNA OrzP, which differs only in 4 of these 18 bases, does not repress ZorO toxicity. Integration of the protein into the inner membrane damages membrane integrity and affects membrane potential. It leads to increased levels of hydroxyl radicals. The polypeptide is Small toxic protein ZorO (Escherichia coli O157:H7).